Consider the following 310-residue polypeptide: uncharacterized protein (310 aa).

The Cytoplasmic portion of the chain corresponds to M1–A6. The PQ-loop 1 domain occupies K5–Q69. Residues A7 to I27 traverse the membrane as a helical segment. The Extracellular portion of the chain corresponds to Y28–T36. Residues G37–F57 form a helical membrane-spanning segment. The Cytoplasmic portion of the chain corresponds to C58 to K61. Residues G62 to V82 form a helical membrane-spanning segment. The Extracellular segment spans residues Q83–K96. A helical transmembrane segment spans residues I97–L117. Topologically, residues W118–D131 are cytoplasmic. Residues L132–E152 form a helical membrane-spanning segment. The PQ-loop 2 domain occupies A138–L194. Residues L153–N164 lie on the Extracellular side of the membrane. The helical transmembrane segment at F165 to G185 threads the bilayer. Over N186 to G191 the chain is Cytoplasmic. The chain crosses the membrane as a helical span at residues I192–W212. Residues W213–V310 are Extracellular-facing. Position 229 is a phosphoserine (S229). N-linked (GlcNAc...) asparagine glycans are attached at residues N251 and N259.

It is found in the cell membrane. This is an uncharacterized protein from Saccharomyces cerevisiae (strain ATCC 204508 / S288c) (Baker's yeast).